The primary structure comprises 91 residues: MGRSLKKGPFIADSLIKKVEKQNSDDDKSVIKTWSRASTILPMMIGHTIAVHNGKTHVPVFITEQMVGHKLGEFAPTRTYRGHMKDKKGGR.

It belongs to the universal ribosomal protein uS19 family.

Functionally, protein S19 forms a complex with S13 that binds strongly to the 16S ribosomal RNA. This is Small ribosomal subunit protein uS19 from Prochlorococcus marinus (strain SARG / CCMP1375 / SS120).